A 194-amino-acid polypeptide reads, in one-letter code: Imidazoleglycerol-phosphate dehydratase (194 aa).

It belongs to the imidazoleglycerol-phosphate dehydratase family.

It is found in the cytoplasm. The enzyme catalyses D-erythro-1-(imidazol-4-yl)glycerol 3-phosphate = 3-(imidazol-4-yl)-2-oxopropyl phosphate + H2O. It functions in the pathway amino-acid biosynthesis; L-histidine biosynthesis; L-histidine from 5-phospho-alpha-D-ribose 1-diphosphate: step 6/9. The chain is Imidazoleglycerol-phosphate dehydratase from Thermus thermophilus (strain ATCC 27634 / DSM 579 / HB8).